A 153-amino-acid polypeptide reads, in one-letter code: MKHEILLLGKIKDSFIAEGVEEYLKRLQHYTKVELRYLKGKGKKGALLSTEQEGELLLANVPANAFVVALDVQGKNLSSEGLAEQVINWENTGTRSVCYLIGGPLGLSPSLLARADLRLSFSKMTFTHDMVRLLLVEQLYRAYTIKAGEKYHK.

S-adenosyl-L-methionine-binding positions include Leu70, Gly102, and 121–126 (FSKMTF).

Belongs to the RNA methyltransferase RlmH family. Homodimer.

It is found in the cytoplasm. The catalysed reaction is pseudouridine(1915) in 23S rRNA + S-adenosyl-L-methionine = N(3)-methylpseudouridine(1915) in 23S rRNA + S-adenosyl-L-homocysteine + H(+). Its function is as follows. Specifically methylates the pseudouridine at position 1915 (m3Psi1915) in 23S rRNA. This chain is Ribosomal RNA large subunit methyltransferase H, found in Desulfotalea psychrophila (strain LSv54 / DSM 12343).